Here is a 380-residue protein sequence, read N- to C-terminus: Cytochrome b (380 aa).

4 helical membrane passes run 34–54 (FGSLLGLCLIAQIATGLFLAM), 78–99 (WLLRNLHANGASFFFICIYFHI), 114–134 (WNIGVILLFLLMATAFVGYVL), and 179–199 (FFTFHFILPFIITAVSLIHLL). The heme b site is built by H84 and H98. Residues H183 and H197 each coordinate heme b. Residue H202 participates in a ubiquinone binding. Helical transmembrane passes span 227-247 (YKDLLGFVIMLGALASLSTFA), 289-309 (LGGVLAVVLSIMVLFLMPIIH), 321-341 (IAKTFFWALIANTAILTWIGG), and 348-368 (FITIGQIASGLYFLIFVLLIP).

Belongs to the cytochrome b family. In terms of assembly, the cytochrome bc1 complex contains 3 respiratory subunits (MT-CYB, CYC1 and UQCRFS1), 2 core proteins (UQCRC1 and UQCRC2) and probably 6 low-molecular weight proteins. Heme b is required as a cofactor.

Its subcellular location is the mitochondrion inner membrane. Functionally, component of the ubiquinol-cytochrome c reductase complex (complex III or cytochrome b-c1 complex) that is part of the mitochondrial respiratory chain. The b-c1 complex mediates electron transfer from ubiquinol to cytochrome c. Contributes to the generation of a proton gradient across the mitochondrial membrane that is then used for ATP synthesis. The polypeptide is Cytochrome b (mt-cyb) (Rana amurensis (Siberian wood frog)).